Reading from the N-terminus, the 92-residue chain is Small ribosomal subunit protein uS19 (92 aa).

The protein belongs to the universal ribosomal protein uS19 family.

Functionally, protein S19 forms a complex with S13 that binds strongly to the 16S ribosomal RNA. The polypeptide is Small ribosomal subunit protein uS19 (Sulfurovum sp. (strain NBC37-1)).